A 93-amino-acid polypeptide reads, in one-letter code: Small ribosomal subunit protein uS19 (93 aa).

The protein belongs to the universal ribosomal protein uS19 family.

Functionally, protein S19 forms a complex with S13 that binds strongly to the 16S ribosomal RNA. This is Small ribosomal subunit protein uS19 from Cutibacterium acnes (strain DSM 16379 / KPA171202) (Propionibacterium acnes).